A 274-amino-acid polypeptide reads, in one-letter code: Nickel/cobalt efflux system RcnA (274 aa).

Over 1–12 (MTEFTTLLQQGN) the chain is Periplasmic. A helical membrane pass occupies residues 13–33 (AWFFIPSAILLGALHGLEPGH). Topologically, residues 34 to 56 (SKTMMAAFIIAIKGTIKQAVMLG) are cytoplasmic. Residues 57–77 (LAATISHTAVVWLIAFGGMVI) traverse the membrane as a helical segment. At 78 to 86 (SKRFTAQSA) the chain is on the periplasmic side. The helical transmembrane segment at 87-107 (EPWLQLISAVIIISTAFWMFW) threads the bilayer. Residues 108-174 (RTWRGERNWL…FDGREVTNWQ (67 aa)) are Cytoplasmic-facing. Residues 127-137 (HHHHDHEDHHD) show a composition bias toward basic and acidic residues. The tract at residues 127 to 153 (HHHHDHEDHHDHGHHHHHEHGEYQDAH) is disordered. Residues 175–195 (ILLFGLTGGLIPCPAAITVLL) form a helical membrane-spanning segment. Residues 196-209 (ICIQLKALTLGATL) are Periplasmic-facing. A helical membrane pass occupies residues 210 to 230 (VVSFSLGLALTLVTVSVGAAI). The Cytoplasmic segment spans residues 231-251 (SVQQVAKRWSGFNTLAKRAPY). A helical membrane pass occupies residues 252-272 (FSSLLIGLVGVYMGVHGFMGI). Residues 273–274 (MR) are Periplasmic-facing.

Belongs to the NiCoT transporter (TC 2.A.52) family. RcnA subfamily.

Its subcellular location is the cell inner membrane. Its function is as follows. Efflux system for nickel and cobalt. In Escherichia coli O6:K15:H31 (strain 536 / UPEC), this protein is Nickel/cobalt efflux system RcnA (rcnA).